A 144-amino-acid chain; its full sequence is Translation initiation factor 5A (144 aa).

Lys-38 is modified (hypusine).

It belongs to the eIF-5A family.

It localises to the cytoplasm. Functions by promoting the formation of the first peptide bond. The chain is Translation initiation factor 5A from Nanoarchaeum equitans (strain Kin4-M).